The following is a 281-amino-acid chain: Acetyl-coenzyme A carboxylase carboxyl transferase subunit beta (281 aa).

Positions 23 to 281 constitute a CoA carboxyltransferase N-terminal domain; that stretch reads IWTKCGSCQA…SLLVKLHYKN (259 aa). 4 residues coordinate Zn(2+): Cys-27, Cys-30, Cys-46, and Cys-49. The C4-type zinc-finger motif lies at 27 to 49; the sequence is CGSCQAVLYKSELEKLQEVCPKC.

Belongs to the AccD/PCCB family. As to quaternary structure, acetyl-CoA carboxylase is a heterohexamer composed of biotin carboxyl carrier protein (AccB), biotin carboxylase (AccC) and two subunits each of ACCase subunit alpha (AccA) and ACCase subunit beta (AccD). Zn(2+) is required as a cofactor.

It is found in the cytoplasm. The catalysed reaction is N(6)-carboxybiotinyl-L-lysyl-[protein] + acetyl-CoA = N(6)-biotinyl-L-lysyl-[protein] + malonyl-CoA. It functions in the pathway lipid metabolism; malonyl-CoA biosynthesis; malonyl-CoA from acetyl-CoA: step 1/1. Functionally, component of the acetyl coenzyme A carboxylase (ACC) complex. Biotin carboxylase (BC) catalyzes the carboxylation of biotin on its carrier protein (BCCP) and then the CO(2) group is transferred by the transcarboxylase to acetyl-CoA to form malonyl-CoA. The polypeptide is Acetyl-coenzyme A carboxylase carboxyl transferase subunit beta (Alteromonas mediterranea (strain DSM 17117 / CIP 110805 / LMG 28347 / Deep ecotype)).